A 388-amino-acid polypeptide reads, in one-letter code: Purple acid phosphatase 19 (388 aa).

Positions 1–24 (MGLNHLTLVCSAIALLSIFVVSQA) are cleaved as a signal peptide. N-linked (GlcNAc...) asparagine glycans are attached at residues Asn-97 and Asn-111. 2 residues coordinate Fe cation: Asp-145 and Tyr-148. Asp-145 lines the Zn(2+) pocket. A Zn(2+)-binding site is contributed by Asn-182. Residue Asn-182 participates in substrate binding. Asn-226 carries N-linked (GlcNAc...) asparagine glycosylation. A Zn(2+)-binding site is contributed by His-238. The active-site Proton donor is the His-248. Position 275 (His-275) interacts with Zn(2+). A substrate-binding site is contributed by 275 to 277 (HVH). His-277 contacts Fe cation. N-linked (GlcNAc...) asparagine glycans are attached at residues Asn-291 and Asn-348.

It belongs to the metallophosphoesterase superfamily. Purple acid phosphatase family. Homodimer. Fe cation serves as cofactor. Zn(2+) is required as a cofactor. Specifically expressed in flowers.

It is found in the secreted. It carries out the reaction a phosphate monoester + H2O = an alcohol + phosphate. The polypeptide is Purple acid phosphatase 19 (PAP19) (Arabidopsis thaliana (Mouse-ear cress)).